Here is an 82-residue protein sequence, read N- to C-terminus: UPF0291 protein LVIS_1359 (82 aa).

The protein belongs to the UPF0291 family.

It is found in the cytoplasm. The sequence is that of UPF0291 protein LVIS_1359 from Levilactobacillus brevis (strain ATCC 367 / BCRC 12310 / CIP 105137 / JCM 1170 / LMG 11437 / NCIMB 947 / NCTC 947) (Lactobacillus brevis).